The following is a 430-amino-acid chain: Protein AST2 (430 aa).

In terms of biological role, lipid raft-associated protein involved in the targeting of PMA1 from Golgi to the plasma membrane. May induce clustering of PMA1, which facilitates partition of PMA1 into lipid rafts after leaving the ER its and transport to the cell surface. The protein is Protein AST2 of Saccharomyces cerevisiae (strain ATCC 204508 / S288c) (Baker's yeast).